We begin with the raw amino-acid sequence, 910 residues long: DNA mismatch repair protein MutS (910 aa).

Residues 1–11 (MEAKVEEKEPE) show a composition bias toward basic and acidic residues. The interval 1 to 21 (MEAKVEEKEPEPVENAGPDAP) is disordered. ATP is bound at residue 658-665 (GPNMGGKS).

The protein belongs to the DNA mismatch repair MutS family.

Its function is as follows. This protein is involved in the repair of mismatches in DNA. It is possible that it carries out the mismatch recognition step. This protein has a weak ATPase activity. This is DNA mismatch repair protein MutS from Brucella suis (strain ATCC 23445 / NCTC 10510).